The primary structure comprises 460 residues: V-type ATP synthase beta chain (460 aa).

Belongs to the ATPase alpha/beta chains family.

Its function is as follows. Produces ATP from ADP in the presence of a proton gradient across the membrane. The V-type beta chain is a regulatory subunit. This Acetivibrio thermocellus (strain ATCC 27405 / DSM 1237 / JCM 9322 / NBRC 103400 / NCIMB 10682 / NRRL B-4536 / VPI 7372) (Clostridium thermocellum) protein is V-type ATP synthase beta chain.